Here is a 507-residue protein sequence, read N- to C-terminus: MVTIRADEISDIIRERIEQYNREVKILNTGTVLQVGDGIARIYGLDEVMAGELVEFEEGTIGIALNLESNNVGVVLMGDGLMIQEGSSVKATGRIAQIPVSEAFLGRVINALAKPIDGRGEISASESRLIESPAPGIISRRSVYEPLQTGLIAIDSMIPIGRGQRELIIGDRQTGKTAVATDTILNQQGQNVICVYVAIGQKASSVAQVVTTLQERGAMEYTIVVAETADSPATLQYLAPYTGATLAEYFMYREQHTSIIYDDPSKQAQAYRQMSLLLRRPPGREAYPGDVFYLHSRLLERAAKSSSRLGEGSMTALPIVETQSGDVSAYIPTNVISITDGQIFLSADLFNAGIRPAINVGISVSRVGSAAQIKAMKQVAGKLKLELAQFAELEAFAQFASDLDKATQNQLARGQRLRELLKQSQSAPLAVEEQIITIYTGTNGYLDSLEIGQVRKFLVELRTYLKTNKPQFQEIISSTKTFTKEAEALLKEAIQEQMERFLLQEQV.

170–177 contacts ATP; it reads GDRQTGKT.

The protein belongs to the ATPase alpha/beta chains family. F-type ATPases have 2 components, CF(1) - the catalytic core - and CF(0) - the membrane proton channel. CF(1) has five subunits: alpha(3), beta(3), gamma(1), delta(1), epsilon(1). CF(0) has four main subunits: a, b, b' and c.

The protein localises to the plastid. It is found in the chloroplast thylakoid membrane. The enzyme catalyses ATP + H2O + 4 H(+)(in) = ADP + phosphate + 5 H(+)(out). Functionally, produces ATP from ADP in the presence of a proton gradient across the membrane. The alpha chain is a regulatory subunit. This Morus indica (Mulberry) protein is ATP synthase subunit alpha, chloroplastic.